The sequence spans 139 residues: Small ribosomal subunit protein eS12 (139 aa).

Belongs to the eukaryotic ribosomal protein eS12 family. As to quaternary structure, subunit of the 40S ribosomal complex. Part of the small subunit (SSU) processome, composed of more than 70 proteins and the RNA chaperone small nucleolar RNA (snoRNA) U3.

The protein resides in the nucleus. It localises to the nucleolus. Subunit of the 40S ribosomal complex. Part of the small subunit (SSU) processome, first precursor of the small eukaryotic ribosomal subunit. During the assembly of the SSU processome in the nucleolus, many ribosome biogenesis factors, an RNA chaperone and ribosomal proteins associate with the nascent pre-rRNA and work in concert to generate RNA folding, modifications, rearrangements and cleavage as well as targeted degradation of pre-ribosomal RNA by the RNA exosome. In wing imaginal disks, might have a role in translation rate, growth and cell competition, probably through regulation of Xrp1 expression. Might have a role in development and longevity. The polypeptide is Small ribosomal subunit protein eS12 (Drosophila melanogaster (Fruit fly)).